Reading from the N-terminus, the 61-residue chain is uncharacterized protein (61 aa).

The segment at 23–61 (VPTKWQDYKKPGPNQKYTSDGKKRRRIRRSQKSILGVRS) is disordered. Residues 44–53 (KKRRRIRRSQ) are compositionally biased toward basic residues.

This is an uncharacterized protein from Archaeoglobus fulgidus (strain ATCC 49558 / DSM 4304 / JCM 9628 / NBRC 100126 / VC-16).